We begin with the raw amino-acid sequence, 172 residues long: Protein-export protein SecB (172 aa).

It belongs to the SecB family. As to quaternary structure, homotetramer, a dimer of dimers. One homotetramer interacts with 1 SecA dimer.

It localises to the cytoplasm. Functionally, one of the proteins required for the normal export of preproteins out of the cell cytoplasm. It is a molecular chaperone that binds to a subset of precursor proteins, maintaining them in a translocation-competent state. It also specifically binds to its receptor SecA. The protein is Protein-export protein SecB of Bordetella avium (strain 197N).